The chain runs to 475 residues: Lipoprotein lipase (475 aa).

Residues 1-27 form the signal peptide; sequence MESKALLVLTLAVWLQSLTASRGGVAA. The tract at residues 32 to 53 is interaction with GPIHBP1; the sequence is RDFIDIESKFALRTPEDTAEDT. C54 and C67 are joined by a disulfide. The N-linked (GlcNAc...) asparagine glycan is linked to N70. Residue Y121 is modified to 3'-nitrotyrosine. The active-site Nucleophile is the S159. The active-site Charge relay system is the D183. Position 191 is a 3'-nitrotyrosine (Y191). 4 residues coordinate Ca(2+): A194, R197, S199, and D202. Cysteines 243 and 266 form a disulfide. The interval 243–266 is essential for determining substrate specificity; it reads CNIGEAIRVIAERGLGDVDQLVKC. H268 functions as the Charge relay system in the catalytic mechanism. Intrachain disulfides connect C291–C310 and C302–C305. One can recognise a PLAT domain in the interval 341-464; it reads FHYQVKIHFS…KGKAPAVFVK (124 aa). The residue at position 343 (Y343) is a 3'-nitrotyrosine. N386 carries an N-linked (GlcNAc...) asparagine glycan. The tract at residues 417-421 is important for interaction with lipoprotein particles; it reads WSDWW. The interval 430–434 is important for heparin binding; that stretch reads KIRVK. The interval 443–467 is interaction with GPIHBP1; the sequence is IFCSREKVSHLQKGKAPAVFVKCHD. The cysteines at positions 445 and 465 are disulfide-linked.

Belongs to the AB hydrolase superfamily. Lipase family. As to quaternary structure, homodimer. Interacts with GPIHBP1 with 1:1 stoichiometry. Interacts with APOC2; the interaction activates LPL activity in the presence of lipids. Interaction with heparan sulfate proteoglycans is required to protect LPL against loss of activity. Associates with lipoprotein particles in blood plasma. Interacts with LMF1 and SEL1L; interaction with SEL1L is required to prevent aggregation of newly synthesized LPL in the endoplasmic reticulum (ER), and for normal export of LPL from the ER to the extracellular space. Interacts with SORL1; SORL1 acts as a sorting receptor, promoting LPL localization to endosomes and later to lysosomes, leading to degradation of newly synthesized LPL. In terms of processing, tyrosine nitration after lipopolysaccharide (LPS) challenge down-regulates the lipase activity. Detected in blood plasma. Detected in milk (at protein level).

The protein localises to the cell membrane. It is found in the secreted. It localises to the extracellular space. Its subcellular location is the extracellular matrix. The catalysed reaction is a triacylglycerol + H2O = a diacylglycerol + a fatty acid + H(+). It catalyses the reaction a 1,2-diacyl-sn-glycero-3-phosphocholine + H2O = a 2-acyl-sn-glycero-3-phosphocholine + a fatty acid + H(+). The enzyme catalyses 1,2,3-tri-(9Z-octadecenoyl)-glycerol + H2O = di-(9Z)-octadecenoylglycerol + (9Z)-octadecenoate + H(+). It carries out the reaction 1,2-di-(9Z-octadecenoyl)-sn-glycero-3-phosphocholine + H2O = (9Z-octadecenoyl)-sn-glycero-3-phosphocholine + (9Z)-octadecenoate + H(+). The catalysed reaction is 1,2,3-tributanoylglycerol + H2O = dibutanoylglycerol + butanoate + H(+). It catalyses the reaction 1,2-dihexadecanoyl-sn-glycero-3-phosphocholine + H2O = hexadecanoyl-sn-glycero-3-phosphocholine + hexadecanoate + H(+). Its activity is regulated as follows. The apolipoprotein APOC2 acts as a coactivator of LPL activity. Ca(2+) binding promotes protein stability and formation of the active homodimer. Interaction with GPIHBP1 protects LPL against inactivation by ANGPTL4. Inhibited by NaCl. Functionally, key enzyme in triglyceride metabolism. Catalyzes the hydrolysis of triglycerides from circulating chylomicrons and very low density lipoproteins (VLDL), and thereby plays an important role in lipid clearance from the blood stream, lipid utilization and storage. Although it has both phospholipase and triglyceride lipase activities it is primarily a triglyceride lipase with low but detectable phospholipase activity. Mediates margination of triglyceride-rich lipoprotein particles in capillaries. Recruited to its site of action on the luminal surface of vascular endothelium by binding to GPIHBP1 and cell surface heparan sulfate proteoglycans. The sequence is that of Lipoprotein lipase (LPL) from Homo sapiens (Human).